The following is a 1557-amino-acid chain: DVA-1 polyprotein (1557 aa).

A signal peptide spans 1-21 (MKSTSFITLLLLSYFIVEAHS). Residues 22–60 (SIFHWDDERLFKHDDTHSWLTDVQKAELETLKHQPIQLR) constitute a propeptide that is removed on maturation. Residue asparagine 997 is glycosylated (N-linked (GlcNAc...) asparagine).

Belongs to the NPA family. In terms of processing, nematode polyprotein allergens (NPAs) are synthesized as large polypeptides that are subsequently proteolytically cleaved to active polypeptide units.

Functionally, has high binding affinity for fatty acids and retinoids. This chain is DVA-1 polyprotein (DVA-1), found in Dictyocaulus viviparus (Bovine lungworm).